A 330-amino-acid polypeptide reads, in one-letter code: Phosphate acyltransferase (330 aa).

It belongs to the PlsX family. Homodimer. Probably interacts with PlsY.

It is found in the cytoplasm. The enzyme catalyses a fatty acyl-[ACP] + phosphate = an acyl phosphate + holo-[ACP]. It functions in the pathway lipid metabolism; phospholipid metabolism. Its function is as follows. Catalyzes the reversible formation of acyl-phosphate (acyl-PO(4)) from acyl-[acyl-carrier-protein] (acyl-ACP). This enzyme utilizes acyl-ACP as fatty acyl donor, but not acyl-CoA. The chain is Phosphate acyltransferase from Bacillus cereus (strain B4264).